The primary structure comprises 148 residues: Large ribosomal subunit protein bL9 (148 aa).

Belongs to the bacterial ribosomal protein bL9 family.

Binds to the 23S rRNA. The polypeptide is Large ribosomal subunit protein bL9 (Desulfitobacterium hafniense (strain DSM 10664 / DCB-2)).